The chain runs to 247 residues: MKMRAVAVFTGMLTGVLSVTGLLSAGAYAAGGEGNMSASATETNARVFSLHLGATRVVYNPASSGETLTVINDQDYPMLVQSEVLSEDQKSPAPFWWTPPLFRRDGQQSSRRRSVSTGGEFPSDRESRQWICVKGIPPKEDDRWAEGKDGEKKADKVSLNVQLSVSSCIKLFVRPPAVKGRPDDVAGKVEWQRAGNRLKGVNPTPFYINLSTLTVGGKEVKEREYIAPFSSREYPLPAGHRVRFSGR.

An N-terminal signal peptide occupies residues 1-29 (MKMRAVAVFTGMLTGVLSVTGLLSAGAYA). The segment at 106–125 (GQQSSRRRSVSTGGEFPSDR) is disordered.

The protein belongs to the periplasmic pilus chaperone family.

It is found in the periplasm. Involved in the biogenesis of the NFA-I adhesin. This is Chaperone protein NfaE (nfaE) from Escherichia coli.